The chain runs to 205 residues: Glycerol-3-phosphate acyltransferase (205 aa).

The next 5 helical transmembrane spans lie at 4–24 (IAPGMILFAYLCGSISSAILV), 56–76 (VAVLIFDVLKGMLPVWGAYAL), 81–101 (FWLGLIAIAACLGHIWPVFFG), 112–132 (FGAIAPIGWDLTGVMAGTWLL), and 138–158 (GYSSLGAIVSALIAPFYVWWF).

This sequence belongs to the PlsY family. As to quaternary structure, probably interacts with PlsX.

It is found in the cell inner membrane. The catalysed reaction is an acyl phosphate + sn-glycerol 3-phosphate = a 1-acyl-sn-glycero-3-phosphate + phosphate. Its pathway is lipid metabolism; phospholipid metabolism. Functionally, catalyzes the transfer of an acyl group from acyl-phosphate (acyl-PO(4)) to glycerol-3-phosphate (G3P) to form lysophosphatidic acid (LPA). This enzyme utilizes acyl-phosphate as fatty acyl donor, but not acyl-CoA or acyl-ACP. In Citrobacter koseri (strain ATCC BAA-895 / CDC 4225-83 / SGSC4696), this protein is Glycerol-3-phosphate acyltransferase.